Here is a 220-residue protein sequence, read N- to C-terminus: Endonuclease NucS (220 aa).

The protein belongs to the NucS endonuclease family.

It is found in the cytoplasm. In terms of biological role, cleaves both 3' and 5' ssDNA extremities of branched DNA structures. In Mycobacterium leprae (strain TN), this protein is Endonuclease NucS.